The chain runs to 208 residues: Small ribosomal subunit protein uS4 (208 aa).

An S4 RNA-binding domain is found at 95-157; sequence RRIDNVVYRA…DRLKKLVRSN (63 aa).

The protein belongs to the universal ribosomal protein uS4 family. As to quaternary structure, part of the 30S ribosomal subunit. Contacts protein S5. The interaction surface between S4 and S5 is involved in control of translational fidelity.

In terms of biological role, one of the primary rRNA binding proteins, it binds directly to 16S rRNA where it nucleates assembly of the body of the 30S subunit. Its function is as follows. With S5 and S12 plays an important role in translational accuracy. This Borrelia turicatae (strain 91E135) protein is Small ribosomal subunit protein uS4.